Here is a 1579-residue protein sequence, read N- to C-terminus: Pentafunctional AROM polypeptide (1579 aa).

A 3-dehydroquinate synthase region spans residues 1–391 (MKVELSKVPI…YGTSAHVVSD (391 aa)). Residues 44 to 46 (DTN), 79 to 82 (EAHK), 110 to 112 (GGV), and Asp115 contribute to the NAD(+) site. Arg126 serves as a coordination point for 7-phospho-2-dehydro-3-deoxy-D-arabino-heptonate. 135–136 (TS) contacts NAD(+). 2 residues coordinate 7-phospho-2-dehydro-3-deoxy-D-arabino-heptonate: Asp142 and Lys148. Lys157 lines the NAD(+) pocket. Residue Asn158 coordinates 7-phospho-2-dehydro-3-deoxy-D-arabino-heptonate. NAD(+) contacts are provided by residues 175-178 (WLET) and Asn186. Residue Glu190 coordinates Zn(2+). Residues 190 to 193 (EVIK) and Lys257 contribute to the 7-phospho-2-dehydro-3-deoxy-D-arabino-heptonate site. Glu267 functions as the Proton acceptor; for 3-dehydroquinate synthase activity in the catalytic mechanism. 7-phospho-2-dehydro-3-deoxy-D-arabino-heptonate is bound by residues 271–275 (RNLLN) and His278. His278 is a binding site for Zn(2+). His282 serves as the catalytic Proton acceptor; for 3-dehydroquinate synthase activity. 7-phospho-2-dehydro-3-deoxy-D-arabino-heptonate-binding residues include His294 and Lys363. His294 contributes to the Zn(2+) binding site. The interval 404–862 (VYPFKTLENG…WDVLHTQLGA (459 aa)) is EPSP synthase. The active-site For EPSP synthase activity is the Cys844. The shikimate kinase stretch occupies residues 881-1070 (SIVIIGMRAA…IPTNRSSFVC (190 aa)). An ATP-binding site is contributed by 886–893 (GMRAAGKT). A 3-dehydroquinase region spans residues 1071 to 1283 (LTFDDLAAHK…SAPGQLTLSQ (213 aa)). Residue His1188 is the Proton acceptor; for 3-dehydroquinate dehydratase activity of the active site. Lys1217 acts as the Schiff-base intermediate with substrate; for 3-dehydroquinate dehydratase activity in catalysis. Residues 1296 to 1579 (AKNFYVVGSP…IYSAVTEEQA (284 aa)) are shikimate dehydrogenase.

This sequence in the N-terminal section; belongs to the sugar phosphate cyclases superfamily. Dehydroquinate synthase family. The protein in the 2nd section; belongs to the EPSP synthase family. It in the 3rd section; belongs to the shikimate kinase family. In the 4th section; belongs to the type-I 3-dehydroquinase family. This sequence in the C-terminal section; belongs to the shikimate dehydrogenase family. In terms of assembly, homodimer. It depends on Zn(2+) as a cofactor.

Its subcellular location is the cytoplasm. It carries out the reaction 7-phospho-2-dehydro-3-deoxy-D-arabino-heptonate = 3-dehydroquinate + phosphate. It catalyses the reaction 3-dehydroquinate = 3-dehydroshikimate + H2O. The enzyme catalyses shikimate + NADP(+) = 3-dehydroshikimate + NADPH + H(+). The catalysed reaction is shikimate + ATP = 3-phosphoshikimate + ADP + H(+). It carries out the reaction 3-phosphoshikimate + phosphoenolpyruvate = 5-O-(1-carboxyvinyl)-3-phosphoshikimate + phosphate. The protein operates within metabolic intermediate biosynthesis; chorismate biosynthesis; chorismate from D-erythrose 4-phosphate and phosphoenolpyruvate: step 2/7. It functions in the pathway metabolic intermediate biosynthesis; chorismate biosynthesis; chorismate from D-erythrose 4-phosphate and phosphoenolpyruvate: step 3/7. It participates in metabolic intermediate biosynthesis; chorismate biosynthesis; chorismate from D-erythrose 4-phosphate and phosphoenolpyruvate: step 4/7. Its pathway is metabolic intermediate biosynthesis; chorismate biosynthesis; chorismate from D-erythrose 4-phosphate and phosphoenolpyruvate: step 5/7. The protein operates within metabolic intermediate biosynthesis; chorismate biosynthesis; chorismate from D-erythrose 4-phosphate and phosphoenolpyruvate: step 6/7. In terms of biological role, the AROM polypeptide catalyzes 5 consecutive enzymatic reactions in prechorismate polyaromatic amino acid biosynthesis. This Lachancea thermotolerans (strain ATCC 56472 / CBS 6340 / NRRL Y-8284) (Yeast) protein is Pentafunctional AROM polypeptide.